The following is a 488-amino-acid chain: 3-octaprenyl-4-hydroxybenzoate carboxy-lyase (488 aa).

Asn172 lines the Mn(2+) pocket. Prenylated FMN-binding positions include 175–177, 189–191, and 194–195; these read IYR, RWL, and RG. Glu238 lines the Mn(2+) pocket. Asp287 serves as the catalytic Proton donor.

It belongs to the UbiD family. Homohexamer. Requires prenylated FMN as cofactor. Mn(2+) is required as a cofactor.

The protein localises to the cell membrane. It carries out the reaction a 4-hydroxy-3-(all-trans-polyprenyl)benzoate + H(+) = a 2-(all-trans-polyprenyl)phenol + CO2. It participates in cofactor biosynthesis; ubiquinone biosynthesis. In terms of biological role, catalyzes the decarboxylation of 3-octaprenyl-4-hydroxy benzoate to 2-octaprenylphenol, an intermediate step in ubiquinone biosynthesis. This chain is 3-octaprenyl-4-hydroxybenzoate carboxy-lyase, found in Pseudomonas putida (strain GB-1).